We begin with the raw amino-acid sequence, 155 residues long: SsrA-binding protein (155 aa).

Residues aspartate 132–arginine 155 form a disordered region.

Belongs to the SmpB family.

It is found in the cytoplasm. In terms of biological role, required for rescue of stalled ribosomes mediated by trans-translation. Binds to transfer-messenger RNA (tmRNA), required for stable association of tmRNA with ribosomes. tmRNA and SmpB together mimic tRNA shape, replacing the anticodon stem-loop with SmpB. tmRNA is encoded by the ssrA gene; the 2 termini fold to resemble tRNA(Ala) and it encodes a 'tag peptide', a short internal open reading frame. During trans-translation Ala-aminoacylated tmRNA acts like a tRNA, entering the A-site of stalled ribosomes, displacing the stalled mRNA. The ribosome then switches to translate the ORF on the tmRNA; the nascent peptide is terminated with the 'tag peptide' encoded by the tmRNA and targeted for degradation. The ribosome is freed to recommence translation, which seems to be the essential function of trans-translation. This Oceanobacillus iheyensis (strain DSM 14371 / CIP 107618 / JCM 11309 / KCTC 3954 / HTE831) protein is SsrA-binding protein.